The primary structure comprises 360 residues: Phospho-N-acetylmuramoyl-pentapeptide-transferase (360 aa).

10 helical membrane passes run 26 to 46, 70 to 90, 97 to 117, 134 to 154, 168 to 188, 199 to 219, 236 to 256, 263 to 283, 288 to 308, and 338 to 358; these read AILGVLTALIIAFLVGPAMIR, GTPTMGGALILVAVAVSTLLW, FVWVVLMVTLLFGLIGGIDDY, FFWQSVVGFATAILLYYTAQA, VAIQLGPWFILLTWFVIVGAS, GLAIMPTVLVAGAFGVFAYLS, VGDLVVFTGALVGAGLGFLWF, VFMGDVGALALGAALGVLAVV, IVLVIMGGVFVVETLSVIMQV, and VIVRFWIITVILVLVGLATLK.

Belongs to the glycosyltransferase 4 family. MraY subfamily. Mg(2+) is required as a cofactor.

It localises to the cell inner membrane. It catalyses the reaction UDP-N-acetyl-alpha-D-muramoyl-L-alanyl-gamma-D-glutamyl-meso-2,6-diaminopimeloyl-D-alanyl-D-alanine + di-trans,octa-cis-undecaprenyl phosphate = di-trans,octa-cis-undecaprenyl diphospho-N-acetyl-alpha-D-muramoyl-L-alanyl-D-glutamyl-meso-2,6-diaminopimeloyl-D-alanyl-D-alanine + UMP. The protein operates within cell wall biogenesis; peptidoglycan biosynthesis. Catalyzes the initial step of the lipid cycle reactions in the biosynthesis of the cell wall peptidoglycan: transfers peptidoglycan precursor phospho-MurNAc-pentapeptide from UDP-MurNAc-pentapeptide onto the lipid carrier undecaprenyl phosphate, yielding undecaprenyl-pyrophosphoryl-MurNAc-pentapeptide, known as lipid I. The protein is Phospho-N-acetylmuramoyl-pentapeptide-transferase of Thioalkalivibrio sulfidiphilus (strain HL-EbGR7).